Reading from the N-terminus, the 219-residue chain is MESNNVVLLDFSGSSFGMRLRIALALKGIKYEAKEENLSDKSPLLLEMNPVHKKIPILIHNGKPICESLNILEYIDEVWHEKCPLLPSDPYQRSQARFWANYIDNKIYSTGRRVWSGKGEDQEEAKKEFIEIFKTLEGELGNKTYFGGDNLGFVDVALVPFTSWFYSYETCANFSIEAECRKLVVWQNCMENERVSKSLPHPHKIYDFVLELKHKLGLA.

Residues 4-83 (NNVVLLDFSG…YIDEVWHEKC (80 aa)) form the GST N-terminal domain. Glutathione-binding positions include S14, K41, I55, and 67–68 (ES). In terms of domain architecture, GST C-terminal spans 89-208 (DPYQRSQARF…LPHPHKIYDF (120 aa)).

This sequence belongs to the GST superfamily. HSP26 family.

It carries out the reaction RX + glutathione = an S-substituted glutathione + a halide anion + H(+). Its function is as follows. May play an important role in hormonal and growth regulatory responses. This chain is Probable glutathione S-transferase MSR-1 (MSR-1), found in Nicotiana plumbaginifolia (Leadwort-leaved tobacco).